A 947-amino-acid chain; its full sequence is Pyruvate, phosphate dikinase 1, chloroplastic (947 aa).

The N-terminal 62 residues, 1 to 62 (MAASVSRAIC…GRGQHCSPLR (62 aa)), are a transit peptide targeting the chloroplast. The tract at residues 21 to 54 (DREATSFARRSVAAPRPPHAKAAGVIRSDSGAGR) is disordered. A63 carries the N-acetylalanine; partial modification. T309 carries the post-translational modification Phosphothreonine. S506 carries the post-translational modification Phosphoserine. T527 is subject to Phosphothreonine; by PDRP1. Residue S528 is modified to Phosphoserine; by PDRP1. Residue H529 is the Tele-phosphohistidine intermediate of the active site. 7 residues coordinate substrate: R635, R692, E821, G842, T843, N844, and D845. Position 821 (E821) interacts with Mg(2+). D845 contacts Mg(2+). The active-site Proton donor is the C907.

Belongs to the PEP-utilizing enzyme family. In terms of assembly, homotetramer. Mg(2+) serves as cofactor. Phosphorylation of Thr-527 in the dark inactivates the enzyme, dephosphorylation upon light stimulation reactivates the enzyme. More highly phosphorylated when grown under high rather than low light regimes (70 vs 900 umol photons/m-2/s). the degree of phosphorylation is strictly regulated by light intensity and the light/dark transition has no influence. Phosphorylated in both mesophyll and bundle sheath cells. The phosphorylation at Ser-528 may be important for the phosphorylation at Thr-527 and may also be regulated by light intensity. In terms of tissue distribution, isoform C4PPDKZM1 mainly localized in mesophyll cells and only a low level is found in bundle sheath cells. Isoform CYPPDKZM1 expressed in roots, stems and etiolated leaves.

It is found in the plastid. It localises to the chloroplast. Its subcellular location is the cytoplasm. It catalyses the reaction pyruvate + phosphate + ATP = phosphoenolpyruvate + AMP + diphosphate + H(+). Its pathway is photosynthesis; C4 acid pathway. With respect to regulation, activated by light-induced dephosphorylation. Inhibited by dark-induced phosphorylation. Both reactions are catalyzed by PDRP1. Inactivated by cold due to the dissociation of the homotetramer. Independent of circadian regulation. Its function is as follows. Formation of phosphoenolpyruvate, which is the primary acceptor of CO(2) in C4 and some Crassulacean acid metabolism plants. The chain is Pyruvate, phosphate dikinase 1, chloroplastic from Zea mays (Maize).